Consider the following 821-residue polypeptide: Lon protease (821 aa).

One can recognise a Lon N-terminal domain in the interval 18 to 216 (LPLMSLREVV…KVYELLQGEI (199 aa)). 368–375 (GPPGVGKT) serves as a coordination point for ATP. The 182-residue stretch at 606 to 787 (TSQVGVCTGL…DEVLPQALMA (182 aa)) folds into the Lon proteolytic domain. Active-site residues include Ser-693 and Lys-736.

This sequence belongs to the peptidase S16 family. Homohexamer. Organized in a ring with a central cavity.

The protein localises to the cytoplasm. It carries out the reaction Hydrolysis of proteins in presence of ATP.. ATP-dependent serine protease that mediates the selective degradation of mutant and abnormal proteins as well as certain short-lived regulatory proteins. Required for cellular homeostasis and for survival from DNA damage and developmental changes induced by stress. Degrades polypeptides processively to yield small peptide fragments that are 5 to 10 amino acids long. Binds to DNA in a double-stranded, site-specific manner. In Nitratidesulfovibrio vulgaris (strain ATCC 29579 / DSM 644 / CCUG 34227 / NCIMB 8303 / VKM B-1760 / Hildenborough) (Desulfovibrio vulgaris), this protein is Lon protease.